The following is a 74-amino-acid chain: Peptide BmKb1 (74 aa).

Residues 1 to 22 form the signal peptide; the sequence is MEIKYLLTVFLVLLIVSDHCQA. Lysine 40 carries the lysine amide modification. Residues 46–74 constitute a propeptide that is removed on maturation; sequence DLNGYIDHFKNFRKRDAELEELLSKLPIY.

It belongs to the non-disulfide-bridged peptide (NDBP) superfamily. Short antimicrobial peptide (group 4) family. In terms of tissue distribution, expressed by the venom gland.

The protein resides in the secreted. The protein localises to the target cell membrane. Has antibacterial activity against Gram-positive bacteria S.aureus, M.luteus, B.subtilis, and Gram-negative bacteria E.coli, and P.aeruginosa. In Olivierus martensii (Manchurian scorpion), this protein is Peptide BmKb1.